The following is a 199-amino-acid chain: Probable nicotinate-nucleotide adenylyltransferase (199 aa).

This sequence belongs to the NadD family.

The catalysed reaction is nicotinate beta-D-ribonucleotide + ATP + H(+) = deamido-NAD(+) + diphosphate. It functions in the pathway cofactor biosynthesis; NAD(+) biosynthesis; deamido-NAD(+) from nicotinate D-ribonucleotide: step 1/1. In terms of biological role, catalyzes the reversible adenylation of nicotinate mononucleotide (NaMN) to nicotinic acid adenine dinucleotide (NaAD). The polypeptide is Probable nicotinate-nucleotide adenylyltransferase (Roseiflexus sp. (strain RS-1)).